Here is a 314-residue protein sequence, read N- to C-terminus: tRNA pseudouridine synthase B (314 aa).

Residue His43 coordinates substrate. Catalysis depends on Asp48, which acts as the Nucleophile. 3 residues coordinate substrate: Tyr76, Tyr179, and Leu200.

This sequence belongs to the pseudouridine synthase TruB family. Type 1 subfamily.

It catalyses the reaction uridine(55) in tRNA = pseudouridine(55) in tRNA. Responsible for synthesis of pseudouridine from uracil-55 in the psi GC loop of transfer RNAs. The polypeptide is tRNA pseudouridine synthase B (Escherichia coli O139:H28 (strain E24377A / ETEC)).